The primary structure comprises 359 residues: CDP-glucose 4,6-dehydratase (359 aa).

It belongs to the NAD(P)-dependent epimerase/dehydratase family. It depends on NAD(+) as a cofactor.

It catalyses the reaction CDP-D-glucose = CDP-4-dehydro-6-deoxy-D-glucose + H2O. It functions in the pathway nucleotide-sugar biosynthesis; CDP-3,6-dideoxy-D-mannose biosynthesis; CDP-3,6-dideoxy-D-mannose from CTP and alpha-D-glucose 1-phosphate: step 2/5. The protein operates within bacterial outer membrane biogenesis; LPS O-antigen biosynthesis. The chain is CDP-glucose 4,6-dehydratase (rfbG) from Salmonella typhimurium (strain LT2 / SGSC1412 / ATCC 700720).